The primary structure comprises 156 residues: tRNA (cytidine(34)-2'-O)-methyltransferase (156 aa).

Residues glycine 100, isoleucine 122, and serine 130 each coordinate S-adenosyl-L-methionine.

The protein belongs to the class IV-like SAM-binding methyltransferase superfamily. RNA methyltransferase TrmH family. TrmL subfamily. In terms of assembly, homodimer.

It is found in the cytoplasm. The catalysed reaction is cytidine(34) in tRNA + S-adenosyl-L-methionine = 2'-O-methylcytidine(34) in tRNA + S-adenosyl-L-homocysteine + H(+). It carries out the reaction 5-carboxymethylaminomethyluridine(34) in tRNA(Leu) + S-adenosyl-L-methionine = 5-carboxymethylaminomethyl-2'-O-methyluridine(34) in tRNA(Leu) + S-adenosyl-L-homocysteine + H(+). Functionally, methylates the ribose at the nucleotide 34 wobble position in the two leucyl isoacceptors tRNA(Leu)(CmAA) and tRNA(Leu)(cmnm5UmAA). Catalyzes the methyl transfer from S-adenosyl-L-methionine to the 2'-OH of the wobble nucleotide. This chain is tRNA (cytidine(34)-2'-O)-methyltransferase, found in Aeromonas hydrophila subsp. hydrophila (strain ATCC 7966 / DSM 30187 / BCRC 13018 / CCUG 14551 / JCM 1027 / KCTC 2358 / NCIMB 9240 / NCTC 8049).